Consider the following 402-residue polypeptide: 4-hydroxy-3-methylbut-2-enyl diphosphate reductase (402 aa).

Cysteine 66 contacts [4Fe-4S] cluster. Histidine 96 lines the (2E)-4-hydroxy-3-methylbut-2-enyl diphosphate pocket. Histidine 96 provides a ligand contact to dimethylallyl diphosphate. Residue histidine 96 coordinates isopentenyl diphosphate. Cysteine 157 contacts [4Fe-4S] cluster. Histidine 185 lines the (2E)-4-hydroxy-3-methylbut-2-enyl diphosphate pocket. Residue histidine 185 participates in dimethylallyl diphosphate binding. Histidine 185 is an isopentenyl diphosphate binding site. Glutamate 187 serves as the catalytic Proton donor. Residue threonine 250 coordinates (2E)-4-hydroxy-3-methylbut-2-enyl diphosphate. Cysteine 288 contacts [4Fe-4S] cluster. (2E)-4-hydroxy-3-methylbut-2-enyl diphosphate is bound by residues serine 317, serine 318, asparagine 319, and serine 379. The dimethylallyl diphosphate site is built by serine 317, serine 318, asparagine 319, and serine 379. Isopentenyl diphosphate is bound by residues serine 317, serine 318, asparagine 319, and serine 379.

Belongs to the IspH family. Requires [4Fe-4S] cluster as cofactor.

It catalyses the reaction isopentenyl diphosphate + 2 oxidized [2Fe-2S]-[ferredoxin] + H2O = (2E)-4-hydroxy-3-methylbut-2-enyl diphosphate + 2 reduced [2Fe-2S]-[ferredoxin] + 2 H(+). It carries out the reaction dimethylallyl diphosphate + 2 oxidized [2Fe-2S]-[ferredoxin] + H2O = (2E)-4-hydroxy-3-methylbut-2-enyl diphosphate + 2 reduced [2Fe-2S]-[ferredoxin] + 2 H(+). Its pathway is isoprenoid biosynthesis; dimethylallyl diphosphate biosynthesis; dimethylallyl diphosphate from (2E)-4-hydroxy-3-methylbutenyl diphosphate: step 1/1. It participates in isoprenoid biosynthesis; isopentenyl diphosphate biosynthesis via DXP pathway; isopentenyl diphosphate from 1-deoxy-D-xylulose 5-phosphate: step 6/6. Catalyzes the conversion of 1-hydroxy-2-methyl-2-(E)-butenyl 4-diphosphate (HMBPP) into a mixture of isopentenyl diphosphate (IPP) and dimethylallyl diphosphate (DMAPP). Acts in the terminal step of the DOXP/MEP pathway for isoprenoid precursor biosynthesis. This chain is 4-hydroxy-3-methylbut-2-enyl diphosphate reductase, found in Nostoc punctiforme (strain ATCC 29133 / PCC 73102).